The following is a 146-amino-acid chain: MEMDKRMKSLAMTAFFGELNTLDIMALIMSIFKRHPNNTIFSVDKDGQFIIDFEYDNYKASQYLDLTLTPISGDECKTHASSIAEQLACVDIIKEDISEYIKTTPRLKRFIKKYRNRSDTRISRDTEKLKIALAKGIDYEYIKDAC.

Residues 10–32 traverse the membrane as a helical segment; the sequence is LAMTAFFGELNTLDIMALIMSIF.

This sequence belongs to the chordopoxvirinae H7 family.

It is found in the membrane. Contributes to the formation of crescents and immature virions (IV). The chain is Late protein H7 from Vaccinia virus (strain Tian Tan) (VACV).